We begin with the raw amino-acid sequence, 106 residues long: MLTTTLLFIATAMAEIIGCYLPWLWLRQQGSPWLLVPAAASLTLFVWLLSLHPAASGRVYAAYGGVYVVCALVWLWGVDGEALRPTDWIGAALALTGMGVIASGWR.

The next 4 membrane-spanning stretches (helical) occupy residues 6 to 26, 31 to 51, 59 to 79, and 85 to 105; these read LLFI…WLWL, SPWL…LLSL, VYAA…WGVD, and PTDW…ASGW.

It belongs to the UPF0060 family.

The protein resides in the cell inner membrane. This is UPF0060 membrane protein Csal_2746 from Chromohalobacter salexigens (strain ATCC BAA-138 / DSM 3043 / CIP 106854 / NCIMB 13768 / 1H11).